The sequence spans 292 residues: Ribosomal RNA small subunit methyltransferase A (292 aa).

S-adenosyl-L-methionine is bound by residues Asn29, Leu31, Gly56, Glu77, Asp102, and Asn127.

This sequence belongs to the class I-like SAM-binding methyltransferase superfamily. rRNA adenine N(6)-methyltransferase family. RsmA subfamily.

The protein localises to the cytoplasm. The enzyme catalyses adenosine(1518)/adenosine(1519) in 16S rRNA + 4 S-adenosyl-L-methionine = N(6)-dimethyladenosine(1518)/N(6)-dimethyladenosine(1519) in 16S rRNA + 4 S-adenosyl-L-homocysteine + 4 H(+). In terms of biological role, specifically dimethylates two adjacent adenosines (A1518 and A1519) in the loop of a conserved hairpin near the 3'-end of 16S rRNA in the 30S particle. May play a critical role in biogenesis of 30S subunits. This chain is Ribosomal RNA small subunit methyltransferase A, found in Bacillus pumilus (strain SAFR-032).